The following is a 472-amino-acid chain: Methylenetetrahydrofolate--tRNA-(uracil-5-)-methyltransferase TrmFO (472 aa).

G10–G15 is an FAD binding site.

Belongs to the MnmG family. TrmFO subfamily. FAD serves as cofactor.

It is found in the cytoplasm. The enzyme catalyses uridine(54) in tRNA + (6R)-5,10-methylene-5,6,7,8-tetrahydrofolate + NADH + H(+) = 5-methyluridine(54) in tRNA + (6S)-5,6,7,8-tetrahydrofolate + NAD(+). It carries out the reaction uridine(54) in tRNA + (6R)-5,10-methylene-5,6,7,8-tetrahydrofolate + NADPH + H(+) = 5-methyluridine(54) in tRNA + (6S)-5,6,7,8-tetrahydrofolate + NADP(+). Its function is as follows. Catalyzes the folate-dependent formation of 5-methyl-uridine at position 54 (M-5-U54) in all tRNAs. The sequence is that of Methylenetetrahydrofolate--tRNA-(uracil-5-)-methyltransferase TrmFO from Mesorhizobium japonicum (strain LMG 29417 / CECT 9101 / MAFF 303099) (Mesorhizobium loti (strain MAFF 303099)).